The sequence spans 451 residues: SKLLDNLRDAVRKFLTGSSSYDKAVEDFIKELQKSLISADVNVKLVFSLTNKIKERLKNEKPPTYIERREWFIKIVYDELSNLFGGDKEPKVIPDKIPYVIMLVGVQGTGKTTTAGKLAYFYKKKGFKVGLVGADVYRPAALEQLQQLGQQIGVPVYGEPGEKDAVGIAKRGVEKFLSEKMEIIIVDTAGRHGYGEEAALLEEMKNIYEAIKPDEVTLVIDASIGQKAYDLASKFNQASKIGTIIITKMDGTAKGGGALSAVAATGATIKFIGTGEKIDELEVFNPRRFVARILGMGDIETILEKIKEVENYDKMQKKMEEVISGKGKLTLRDVYNQLIALRKMGPLSKLFQLLPGIGMLGQIPEDQLKVGEEKMRKWLAIMNSMTYEELDNPSIIDKSRMRRIALGSGTEIEDVKELIEHYNLMQRTIKMLKRRKKDVEKLLGQFGGEST.

GTP-binding positions include 105-112, 187-191, and 247-250; these read GVQGTGKT, DTAGR, and TKMD.

It belongs to the GTP-binding SRP family. SRP54 subfamily. In terms of assembly, part of the signal recognition particle protein translocation system, which is composed of SRP and FtsY. Archaeal SRP consists of a 7S RNA molecule of 300 nucleotides and two protein subunits: SRP54 and SRP19.

It localises to the cytoplasm. It carries out the reaction GTP + H2O = GDP + phosphate + H(+). Involved in targeting and insertion of nascent membrane proteins into the cytoplasmic membrane. Binds to the hydrophobic signal sequence of the ribosome-nascent chain (RNC) as it emerges from the ribosomes. The SRP-RNC complex is then targeted to the cytoplasmic membrane where it interacts with the SRP receptor FtsY. In Acidianus ambivalens (Desulfurolobus ambivalens), this protein is Signal recognition particle 54 kDa protein.